The sequence spans 383 residues: Deoxyguanosinetriphosphate triphosphohydrolase-like protein (383 aa).

The HD domain maps to 62–198; that stretch reads RLTHSLEVST…AALADDISYI (137 aa).

This sequence belongs to the dGTPase family. Type 2 subfamily.

This Rickettsia bellii (strain RML369-C) protein is Deoxyguanosinetriphosphate triphosphohydrolase-like protein.